The sequence spans 122 residues: Small ribosomal subunit protein uS10y (122 aa).

This sequence belongs to the universal ribosomal protein uS10 family.

The polypeptide is Small ribosomal subunit protein uS10y (RPS20B) (Arabidopsis thaliana (Mouse-ear cress)).